The primary structure comprises 142 residues: Putative pre-16S rRNA nuclease (142 aa).

Belongs to the YqgF nuclease family.

The protein localises to the cytoplasm. Its function is as follows. Could be a nuclease involved in processing of the 5'-end of pre-16S rRNA. This Malacoplasma penetrans (strain HF-2) (Mycoplasma penetrans) protein is Putative pre-16S rRNA nuclease.